The chain runs to 503 residues: Maturase K (503 aa).

This sequence belongs to the intron maturase 2 family. MatK subfamily.

The protein localises to the plastid. It is found in the chloroplast. Its function is as follows. Usually encoded in the trnK tRNA gene intron. Probably assists in splicing its own and other chloroplast group II introns. The polypeptide is Maturase K (Vicia faba (Broad bean)).